The primary structure comprises 299 residues: Ribosomal protein uL3 glutamine methyltransferase (299 aa).

It belongs to the protein N5-glutamine methyltransferase family. PrmB subfamily.

The catalysed reaction is L-glutaminyl-[ribosomal protein uL3] + S-adenosyl-L-methionine = N(5)-methyl-L-glutaminyl-[ribosomal protein uL3] + S-adenosyl-L-homocysteine + H(+). Functionally, methylates large ribosomal subunit protein uL3 on a specific glutamine residue. The polypeptide is Ribosomal protein uL3 glutamine methyltransferase (Neisseria gonorrhoeae (strain ATCC 700825 / FA 1090)).